A 371-amino-acid polypeptide reads, in one-letter code: Alanine racemase (371 aa).

Lys40 serves as the catalytic Proton acceptor; specific for D-alanine. The residue at position 40 (Lys40) is an N6-(pyridoxal phosphate)lysine. Arg138 serves as a coordination point for substrate. Tyr267 acts as the Proton acceptor; specific for L-alanine in catalysis. Met314 contacts substrate.

Belongs to the alanine racemase family. It depends on pyridoxal 5'-phosphate as a cofactor.

The catalysed reaction is L-alanine = D-alanine. It participates in amino-acid biosynthesis; D-alanine biosynthesis; D-alanine from L-alanine: step 1/1. Its function is as follows. Catalyzes the interconversion of L-alanine and D-alanine. May also act on other amino acids. The sequence is that of Alanine racemase (alr) from Ligilactobacillus salivarius (strain UCC118) (Lactobacillus salivarius).